Here is a 103-residue protein sequence, read N- to C-terminus: Carboxysome shell protein CcmK2 (103 aa).

Positions 4–90 constitute a BMC domain; sequence AVGMIETRGF…PHENLEYVLP (87 aa).

Belongs to the bacterial microcompartments protein family. CcmK subfamily. Homohexamer, might also make dodecamers. Interacts with full-length CcmM. Forms mixed heterohexamers of all possible stoichiometries with CcmK1, which might form dodecamers. Only very weak interactions with CcmK3 and CcmK4 were seen.

Its subcellular location is the carboxysome. Functionally, one of the shell proteins of the carboxysome, a polyhedral inclusion where RuBisCO (ribulose bisphosphate carboxylase, rbcL-rbcS) is sequestered. The central pore probably regulates metabolite flux. Hexamers make sheets that form the facets of the polyhedral carboxysome. The protein is Carboxysome shell protein CcmK2 of Synechocystis sp. (strain ATCC 27184 / PCC 6803 / Kazusa).